The chain runs to 151 residues: Deoxyuridine 5'-triphosphate nucleotidohydrolase (151 aa).

Substrate contacts are provided by residues 70-72 (RSG), Asn83, 87-89 (LID), and Met97.

Belongs to the dUTPase family. The cofactor is Mg(2+).

The enzyme catalyses dUTP + H2O = dUMP + diphosphate + H(+). The protein operates within pyrimidine metabolism; dUMP biosynthesis; dUMP from dCTP (dUTP route): step 2/2. This enzyme is involved in nucleotide metabolism: it produces dUMP, the immediate precursor of thymidine nucleotides and it decreases the intracellular concentration of dUTP so that uracil cannot be incorporated into DNA. The sequence is that of Deoxyuridine 5'-triphosphate nucleotidohydrolase from Hamiltonella defensa subsp. Acyrthosiphon pisum (strain 5AT).